The sequence spans 354 residues: Histidinol-phosphate aminotransferase (354 aa).

K210 bears the N6-(pyridoxal phosphate)lysine mark.

Belongs to the class-II pyridoxal-phosphate-dependent aminotransferase family. Histidinol-phosphate aminotransferase subfamily. As to quaternary structure, homodimer. Pyridoxal 5'-phosphate serves as cofactor.

It carries out the reaction L-histidinol phosphate + 2-oxoglutarate = 3-(imidazol-4-yl)-2-oxopropyl phosphate + L-glutamate. The protein operates within amino-acid biosynthesis; L-histidine biosynthesis; L-histidine from 5-phospho-alpha-D-ribose 1-diphosphate: step 7/9. This Clostridium botulinum (strain Langeland / NCTC 10281 / Type F) protein is Histidinol-phosphate aminotransferase.